We begin with the raw amino-acid sequence, 75 residues long: UPF0270 protein PFLU_4323 (75 aa).

The protein belongs to the UPF0270 family.

The protein is UPF0270 protein PFLU_4323 of Pseudomonas fluorescens (strain SBW25).